We begin with the raw amino-acid sequence, 308 residues long: Elongation factor Ts (308 aa).

An involved in Mg(2+) ion dislocation from EF-Tu region spans residues 79-82 (TDFV).

Belongs to the EF-Ts family.

It localises to the cytoplasm. Functionally, associates with the EF-Tu.GDP complex and induces the exchange of GDP to GTP. It remains bound to the aminoacyl-tRNA.EF-Tu.GTP complex up to the GTP hydrolysis stage on the ribosome. This is Elongation factor Ts from Bdellovibrio bacteriovorus (strain ATCC 15356 / DSM 50701 / NCIMB 9529 / HD100).